Consider the following 436-residue polypeptide: GTPase Obg (436 aa).

In terms of domain architecture, Obg spans 2-160 (SMFLDTAKIK…RELQLELKIL (159 aa)). Residues 161–338 (ADVGLVGFPS…LLDATAELLD (178 aa)) enclose the OBG-type G domain. GTP is bound by residues 167–174 (GFPSVGKS), 192–196 (FTTIV), 214–217 (DLPG), 284–287 (NKMD), and 319–321 (SGL). Residues S174 and T194 each coordinate Mg(2+). Residues 358-436 (GFDEEEKAFE…IGKFEFEFVD (79 aa)) enclose the OCT domain.

This sequence belongs to the TRAFAC class OBG-HflX-like GTPase superfamily. OBG GTPase family. As to quaternary structure, monomer. Mg(2+) is required as a cofactor.

The protein localises to the cytoplasm. An essential GTPase which binds GTP, GDP and possibly (p)ppGpp with moderate affinity, with high nucleotide exchange rates and a fairly low GTP hydrolysis rate. Plays a role in control of the cell cycle, stress response, ribosome biogenesis and in those bacteria that undergo differentiation, in morphogenesis control. This chain is GTPase Obg, found in Streptococcus pneumoniae serotype 2 (strain D39 / NCTC 7466).